We begin with the raw amino-acid sequence, 149 residues long: MAGWFTETQNKAYKDAMSALNANPTIDLENSYVPLQNQYKDIRVDEHPEYLHDKEWAQATYNGDLVGIKTSDVMLGVYVPKEEDVGLGMELGYAMSQGKYVLLVIPDELYGESINLMSWGVADNVIKMSELATFDFNRPRYNFYDGAVY.

Catalysis depends on Glu-90, which acts as the Nucleophile.

The protein belongs to the nucleoside deoxyribosyltransferase family.

It catalyses the reaction 2-deoxy-D-ribosyl-base(1) + base(2) = 2-deoxy-D-ribosyl-base(2) + base(1).. It functions in the pathway nucleotide metabolism; nucleotide salvage pathway. Its function is as follows. Catalyzes the cleavage of the glycosidic bond of 2'-deoxyribonucleosides and the transfer of the deoxyribosyl moiety to an acceptor purine or pyrimidine base. The sequence is that of Nucleoside deoxyribosyltransferase (ntd) from Lactobacillus johnsonii (strain CNCM I-12250 / La1 / NCC 533).